We begin with the raw amino-acid sequence, 153 residues long: NADPH-dependent 7-cyano-7-deazaguanine reductase (153 aa).

The Thioimide intermediate role is filled by C51. Catalysis depends on D58, which acts as the Proton donor. Substrate contacts are provided by residues 73–75 (LES) and 92–93 (HE).

This sequence belongs to the GTP cyclohydrolase I family. QueF type 1 subfamily.

The protein localises to the cytoplasm. It carries out the reaction 7-aminomethyl-7-carbaguanine + 2 NADP(+) = 7-cyano-7-deazaguanine + 2 NADPH + 3 H(+). It functions in the pathway tRNA modification; tRNA-queuosine biosynthesis. Its function is as follows. Catalyzes the NADPH-dependent reduction of 7-cyano-7-deazaguanine (preQ0) to 7-aminomethyl-7-deazaguanine (preQ1). This is NADPH-dependent 7-cyano-7-deazaguanine reductase from Bradyrhizobium diazoefficiens (strain JCM 10833 / BCRC 13528 / IAM 13628 / NBRC 14792 / USDA 110).